The chain runs to 95 residues: Co-chaperonin GroES (95 aa).

The protein belongs to the GroES chaperonin family. In terms of assembly, heptamer of 7 subunits arranged in a ring. Interacts with the chaperonin GroEL.

The protein resides in the cytoplasm. Functionally, together with the chaperonin GroEL, plays an essential role in assisting protein folding. The GroEL-GroES system forms a nano-cage that allows encapsulation of the non-native substrate proteins and provides a physical environment optimized to promote and accelerate protein folding. GroES binds to the apical surface of the GroEL ring, thereby capping the opening of the GroEL channel. The sequence is that of Co-chaperonin GroES from Francisella philomiragia subsp. philomiragia (strain ATCC 25017 / CCUG 19701 / FSC 153 / O#319-036).